Here is a 151-residue protein sequence, read N- to C-terminus: 3-hydroxyacyl-[acyl-carrier-protein] dehydratase FabZ (151 aa).

H57 is an active-site residue.

It belongs to the thioester dehydratase family. FabZ subfamily.

The protein resides in the cytoplasm. It carries out the reaction a (3R)-hydroxyacyl-[ACP] = a (2E)-enoyl-[ACP] + H2O. Functionally, involved in unsaturated fatty acids biosynthesis. Catalyzes the dehydration of short chain beta-hydroxyacyl-ACPs and long chain saturated and unsaturated beta-hydroxyacyl-ACPs. This Tolumonas auensis (strain DSM 9187 / NBRC 110442 / TA 4) protein is 3-hydroxyacyl-[acyl-carrier-protein] dehydratase FabZ.